The sequence spans 97 residues: uncharacterized protein (97 aa).

The segment at 58-97 (SLLLPRTVQTGGTEREKPGPGQRKRGAHCSACKRSSTRPS) is disordered.

This is an uncharacterized protein from Homo sapiens (Human).